The primary structure comprises 349 residues: 2-oxoglutarate and iron-dependent oxygenase domain-containing protein 2 (349 aa).

The 95-residue stretch at 214–308 (DSHRAFVVKY…RWNLVVWLRA (95 aa)) folds into the Fe2OG dioxygenase domain. Fe cation is bound by residues His-234, Asp-236, and His-289. Residue Arg-299 participates in 2-oxoglutarate binding.

It belongs to the OGFOD2 family. It depends on Fe(2+) as a cofactor. L-ascorbate serves as cofactor.

The sequence is that of 2-oxoglutarate and iron-dependent oxygenase domain-containing protein 2 (Ogfod2) from Mus musculus (Mouse).